The sequence spans 305 residues: tRNA-cytidine(32) 2-sulfurtransferase (305 aa).

Positions 1–20 are disordered; it reads MTAVLPLPHPLADPAPRDPR. The short motif at 59–64 is the PP-loop motif element; that stretch reads SGGKDS. Positions 134, 137, and 225 each coordinate [4Fe-4S] cluster. Residues 282-293 show a composition bias toward low complexity; the sequence is DAPPDLAPDPGA. The tract at residues 282–305 is disordered; that stretch reads DAPPDLAPDPGAWLTASDATHDSD.

It belongs to the TtcA family. In terms of assembly, homodimer. The cofactor is Mg(2+). It depends on [4Fe-4S] cluster as a cofactor.

It localises to the cytoplasm. The catalysed reaction is cytidine(32) in tRNA + S-sulfanyl-L-cysteinyl-[cysteine desulfurase] + AH2 + ATP = 2-thiocytidine(32) in tRNA + L-cysteinyl-[cysteine desulfurase] + A + AMP + diphosphate + H(+). It functions in the pathway tRNA modification. Its function is as follows. Catalyzes the ATP-dependent 2-thiolation of cytidine in position 32 of tRNA, to form 2-thiocytidine (s(2)C32). The sulfur atoms are provided by the cysteine/cysteine desulfurase (IscS) system. This is tRNA-cytidine(32) 2-sulfurtransferase from Xanthomonas oryzae pv. oryzae (strain PXO99A).